Consider the following 196-residue polypeptide: Cilia- and flagella-associated protein 107 (196 aa).

2 mn regions span residues 47–62 (TPQC…MPDH) and 97–109 (ISTY…RHNY).

Microtubule inner protein component of sperm flagellar doublet microtubules.

Its subcellular location is the cytoplasm. The protein localises to the cytoskeleton. The protein resides in the cilium axoneme. It localises to the flagellum axoneme. In terms of biological role, microtubule inner protein (MIP) part of the dynein-decorated doublet microtubules (DMTs) in cilia axoneme, which is required for motile cilia beating. The sequence is that of Cilia- and flagella-associated protein 107 from Mus musculus (Mouse).